Here is a 116-residue protein sequence, read N- to C-terminus: MPRSVNHVASKARRKKILKLTRGYFGARKNVWTVAKNTWEKGLTYAFRDRRNKKRNFRALWIQRINAAARLEGMSYSKLMGGLHKAGIEINRKVLADLAVNHPEAFKAVVAKAKVA.

The protein belongs to the bacterial ribosomal protein bL20 family.

Binds directly to 23S ribosomal RNA and is necessary for the in vitro assembly process of the 50S ribosomal subunit. It is not involved in the protein synthesizing functions of that subunit. This is Large ribosomal subunit protein bL20 from Bacteroides fragilis (strain ATCC 25285 / DSM 2151 / CCUG 4856 / JCM 11019 / LMG 10263 / NCTC 9343 / Onslow / VPI 2553 / EN-2).